A 511-amino-acid polypeptide reads, in one-letter code: Maturase K (511 aa).

The protein belongs to the intron maturase 2 family. MatK subfamily.

It is found in the plastid. It localises to the chloroplast. Functionally, usually encoded in the trnK tRNA gene intron. Probably assists in splicing its own and other chloroplast group II introns. In Primula veris (Cowslip), this protein is Maturase K.